A 335-amino-acid chain; its full sequence is Methionine aminopeptidase 1D, mitochondrial (335 aa).

A mitochondrion-targeting transit peptide spans methionine 1 to phenylalanine 19. Histidine 161 is a substrate binding site. The a divalent metal cation site is built by aspartate 178, aspartate 189, and histidine 252. Histidine 259 contributes to the substrate binding site. A divalent metal cation is bound by residues glutamate 284 and glutamate 315.

It belongs to the peptidase M24A family. Methionine aminopeptidase type 1 subfamily. The cofactor is Co(2+). Requires Zn(2+) as cofactor. It depends on Mn(2+) as a cofactor. Fe(2+) serves as cofactor. In terms of tissue distribution, overexpressed in colon cancer cell lines and colon tumors as compared to normal tissues (at protein level).

It is found in the mitochondrion. The catalysed reaction is Release of N-terminal amino acids, preferentially methionine, from peptides and arylamides.. In terms of biological role, removes the N-terminal methionine from nascent proteins. The N-terminal methionine is often cleaved when the second residue in the primary sequence is small and uncharged (Met-Ala-, Cys, Gly, Pro, Ser, Thr, or Val). Requires deformylation of the N(alpha)-formylated initiator methionine before it can be hydrolyzed. May play a role in colon tumorigenesis. This Homo sapiens (Human) protein is Methionine aminopeptidase 1D, mitochondrial (METAP1D).